The sequence spans 1031 residues: Kinesin heavy chain (1031 aa).

The region spanning 8-325 (NIKVVCRVRP…LMFGQRAKTI (318 aa)) is the Kinesin motor domain. ATP is bound at residue 84–91 (GQTSSGKT). Residues 393 to 857 (PKQMTVHVSE…RDNADLRCEL (465 aa)) are a coiled coil. Positions 673–686 (TDQEDKKREEEDKM) are enriched in basic and acidic residues. 2 disordered regions span residues 673 to 692 (TDQEDKKREEEDKMQSATEM) and 906 to 1031 (RNFA…EQGS). Residues 858–1031 (PKLERRLRAT…PLTTSGEQGS (174 aa)) form a globular region. Over residues 932–949 (GSTGIRGGGYSGIRGGGS) the composition is skewed to gly residues. Composition is skewed to polar residues over residues 964–977 (SHNNSFEKSLNPND) and 1014–1031 (RNNTPGKAPLTTSGEQGS).

This sequence belongs to the TRAFAC class myosin-kinesin ATPase superfamily. Kinesin family. Kinesin subfamily. As to quaternary structure, oligomer composed of two heavy chains and two light chains.

Its subcellular location is the cytoplasm. The protein localises to the cytoskeleton. Kinesin is a microtubule-associated force-producing protein that may play a role in organelle transport. In Strongylocentrotus purpuratus (Purple sea urchin), this protein is Kinesin heavy chain.